Reading from the N-terminus, the 875-residue chain is MSNDKYIHTDVEDKIYSYWEKNNLFKPTKNKKQFSVVIPPPNVTGSLHMGHALNNSIQDLLVRYHRMNNYETLWQPGTDHAGIATQALVEKKLTADGIDKNEIGREKFIEKVWEWKEEHGDIILNQLKKLGCSCDWSRNAFTMDENLSKSVLKVFVELHKKGLIYKDKKLVNWDTVLKTAISDLEVDQREVNSKIYYIQYPIEASSDFITIATTRPETMLGDTAIAVNPKDDRFKHLVGKFVTVPIVGKKIKIIEDEYADPEMGTGALKITPAHDFNDYEVGQRNNLEIINIFTEGGKVNENAPKEYIGLDRFEARKRIIKELKEKEFFVKEENIKNKVPYGDRSNSIIEPFLTEQWFVDAKKLSIKAKDIVNSKKTNFFPANWSKTYFQWMNNIEPWCISRQLWWGHQIPAWYGPDKKIFVAINEEEAKLDAKKFYNKDVDLIRDPDVLDTWFSSGLWPFATLGWPDNKEYVDKFYPTSVLVTGFDIIFFWVARMIMFGMEFLDKEPFKDVYVHALVKDEKGQKMSKSKGNVINPLDLIEKYSADALRFTLLSMASPGTDVKLSEDRVKGYRNFLNKLWNANNFLITNNCDFSKIDEKPILSININKWIYAELIETKNKIEKNLKDYRFDEAAKNAYQFTWHSYCDWYLELSKTILFSEDEKAKDEVRQVSAYVFKQILILLHPFIPFVTEEIWLNNKFDNTGKDFLMLANWPSGEFERDTSINQVEKIISIVSELRSFKNELSVSPGSFIDISIETVSKKEQSFFTENEIILKKLGRIKNLYNKDLDKPTATLMVSGDLFKVYFDEDVDLELIKKNLTTRQNKYQEEMNKISQRLANKGFVDRAPKDIVDQEKTNYNNLKNDVERISITIKGL.

A 'HIGH' region motif is present at residues 41–51 (PNVTGSLHMGH). Positions 525 to 529 (KMSKS) match the 'KMSKS' region motif. Lys-528 contributes to the ATP binding site. Residues 810–875 (VDLELIKKNL…ERISITIKGL (66 aa)) are a coiled coil.

This sequence belongs to the class-I aminoacyl-tRNA synthetase family. ValS type 1 subfamily. Monomer.

Its subcellular location is the cytoplasm. It catalyses the reaction tRNA(Val) + L-valine + ATP = L-valyl-tRNA(Val) + AMP + diphosphate. In terms of biological role, catalyzes the attachment of valine to tRNA(Val). As ValRS can inadvertently accommodate and process structurally similar amino acids such as threonine, to avoid such errors, it has a 'posttransfer' editing activity that hydrolyzes mischarged Thr-tRNA(Val) in a tRNA-dependent manner. This Pelagibacter ubique (strain HTCC1062) protein is Valine--tRNA ligase.